The primary structure comprises 339 residues: 5-dehydro-2-deoxygluconokinase (339 aa).

It belongs to the carbohydrate kinase PfkB family.

The enzyme catalyses 5-dehydro-2-deoxy-D-gluconate + ATP = 6-phospho-5-dehydro-2-deoxy-D-gluconate + ADP + H(+). It participates in polyol metabolism; myo-inositol degradation into acetyl-CoA; acetyl-CoA from myo-inositol: step 5/7. Catalyzes the phosphorylation of 5-dehydro-2-deoxy-D-gluconate (2-deoxy-5-keto-D-gluconate or DKG) to 6-phospho-5-dehydro-2-deoxy-D-gluconate (DKGP). This Clostridium botulinum (strain Alaska E43 / Type E3) protein is 5-dehydro-2-deoxygluconokinase.